The sequence spans 236 residues: Small ribosomal subunit protein uS3 (236 aa).

Positions 39–107 constitute a KH type-2 domain; sequence IRLYVLEELK…ETSLNIVEIH (69 aa).

It belongs to the universal ribosomal protein uS3 family. Part of the 30S ribosomal subunit. Forms a tight complex with proteins S10 and S14.

Functionally, binds the lower part of the 30S subunit head. Binds mRNA in the 70S ribosome, positioning it for translation. This is Small ribosomal subunit protein uS3 from Bartonella quintana (strain Toulouse) (Rochalimaea quintana).